We begin with the raw amino-acid sequence, 283 residues long: Acetylglutamate kinase (283 aa).

Residues Gly-64–Gly-65, Arg-86, and Asn-178 contribute to the substrate site.

The protein belongs to the acetylglutamate kinase family. ArgB subfamily.

The protein resides in the cytoplasm. The catalysed reaction is N-acetyl-L-glutamate + ATP = N-acetyl-L-glutamyl 5-phosphate + ADP. It participates in amino-acid biosynthesis; L-arginine biosynthesis; N(2)-acetyl-L-ornithine from L-glutamate: step 2/4. In terms of biological role, catalyzes the ATP-dependent phosphorylation of N-acetyl-L-glutamate. The polypeptide is Acetylglutamate kinase (Lactococcus lactis subsp. cremoris (strain MG1363)).